The chain runs to 340 residues: tRNA N6-adenosine threonylcarbamoyltransferase (340 aa).

Fe cation is bound by residues H111 and H115. Residues 134 to 138, D167, G180, and N272 contribute to the substrate site; that span reads LVSGG. Position 300 (D300) interacts with Fe cation.

Belongs to the KAE1 / TsaD family. It depends on Fe(2+) as a cofactor.

It is found in the cytoplasm. It catalyses the reaction L-threonylcarbamoyladenylate + adenosine(37) in tRNA = N(6)-L-threonylcarbamoyladenosine(37) in tRNA + AMP + H(+). Its function is as follows. Required for the formation of a threonylcarbamoyl group on adenosine at position 37 (t(6)A37) in tRNAs that read codons beginning with adenine. Is involved in the transfer of the threonylcarbamoyl moiety of threonylcarbamoyl-AMP (TC-AMP) to the N6 group of A37, together with TsaE and TsaB. TsaD likely plays a direct catalytic role in this reaction. The sequence is that of tRNA N6-adenosine threonylcarbamoyltransferase from Proteus mirabilis (strain HI4320).